Consider the following 236-residue polypeptide: Ion-translocating oxidoreductase complex subunit E (236 aa).

Helical transmembrane passes span 18–38, 39–59, 69–89, 92–112, 128–148, and 182–202; these read ALVQ…ATNA, LGLG…VSAL, IPIY…LINA, FGLY…CIVI, ALDG…LGAL, and PFLL…MLAF. Residues 217–236 are disordered; the sequence is RSAVGQALRGAAPTDNHEQA.

Belongs to the NqrDE/RnfAE family. The complex is composed of six subunits: RnfA, RnfB, RnfC, RnfD, RnfE and RnfG.

The protein resides in the cell inner membrane. Its function is as follows. Part of a membrane-bound complex that couples electron transfer with translocation of ions across the membrane. This chain is Ion-translocating oxidoreductase complex subunit E, found in Edwardsiella ictaluri (strain 93-146).